The chain runs to 408 residues: Epsin-3 (408 aa).

Serine 2 carries the post-translational modification N-acetylserine. An ENTH domain is found at 24–157; sequence NVVFNYTEME…SDDNKIRAER (134 aa). The disordered stretch occupies residues 162–182; it reads ETAKKYKGVAGGSASADGSLN. Phosphoserine occurs at positions 196, 198, 203, 212, and 223. 2 disordered regions span residues 199-322 and 338-408; these read ADFD…ITPA and TAKA…LLSF. A compositionally biased stretch (acidic residues) spans 201–210; sequence FDSDNEDNED. The span at 211–231 shows a compositional bias: polar residues; the sequence is GSFSQNGYNDNASRATSTPGQ. Basic and acidic residues predominate over residues 249 to 263; the sequence is KPSKELIQEDEKKAD. Positions 264–273 are enriched in acidic residues; sequence EEEDDDDEFS. Residues 279–317 show a composition bias toward polar residues; sequence VPVTNPANSFNLLNTSPIEGMPATTSSMPFYNSSTTDQG. The segment covering 338–361 has biased composition (low complexity); sequence TAKASAEAPSAPKASQAKAAASNP. 2 stretches are compositionally biased toward polar residues: residues 362–371 and 388–398; these read VSNSTTALST and QQEQNTNNNHT. Residues 399–408 show a composition bias toward basic and acidic residues; the sequence is SSKEIDLLSF.

In terms of assembly, interacts with the clathrin adapter GGA2, and VPS27.

Its subcellular location is the cytoplasm. It localises to the golgi apparatus. The protein localises to the trans-Golgi network membrane. The protein resides in the cytoplasmic vesicle. It is found in the clathrin-coated vesicle membrane. In terms of biological role, involved in the recruitment of clathrin to the Golgi network and endosomes to form clathrin coated vesicles. Plays a role in the trafficking of clathrin between the Golgi network and endosomes. Binds to membranes enriched in phosphatidylinositol-3,5-bisphosphate (PtdIns(3,5)P2) and, in association with VPS27, is involved in protein sorting at the multivesicular body (MVB). The chain is Epsin-3 (ENT3) from Saccharomyces cerevisiae (strain ATCC 204508 / S288c) (Baker's yeast).